We begin with the raw amino-acid sequence, 1836 residues long: U3 small nucleolar RNA-associated protein 10 (1836 aa).

Residues 245-283 (EVVGFLLLPSKYETLRNIDVDTRLTAYSIIAVLASIIPI) form an HEAT 1 repeat. Positions 453–473 (SNSSVRDSDDVEFDAGEEDNN) are disordered. The span at 461-473 (DDVEFDAGEEDNN) shows a compositional bias: acidic residues. HEAT repeat units follow at residues 585–623 (PLDL…TTTS) and 813–850 (VENR…DQDL). Positions 863–883 (QIPEQGPAKRRRRSSSSTKQA) are disordered. Helical transmembrane passes span 998–1018 (LLLV…HSVM) and 1085–1105 (LFTY…LLFL). 3 HEAT repeats span residues 1333–1372 (ESVL…KFGA), 1749–1787 (ETLV…KMGE), and 1790–1828 (LTYL…NVLG).

This sequence belongs to the HEATR1/UTP10 family. Component of the ribosomal small subunit (SSU) processome.

Its subcellular location is the nucleus. The protein resides in the nucleolus. It localises to the membrane. Involved in nucleolar processing of pre-18S ribosomal RNA. Involved in ribosome biosynthesis. The chain is U3 small nucleolar RNA-associated protein 10 from Scheffersomyces stipitis (strain ATCC 58785 / CBS 6054 / NBRC 10063 / NRRL Y-11545) (Yeast).